The chain runs to 46 residues: Peroxidase 1 (46 aa).

The protein belongs to the peroxidase family. Classical plant (class III) peroxidase subfamily. The cofactor is heme b. Requires Ca(2+) as cofactor.

Its subcellular location is the secreted. The enzyme catalyses 2 a phenolic donor + H2O2 = 2 a phenolic radical donor + 2 H2O. Its function is as follows. Removal of H(2)O(2), oxidation of toxic reductants, biosynthesis and degradation of lignin, suberization, auxin catabolism, response to environmental stresses such as wounding, pathogen attack and oxidative stress. These functions might be dependent on each isozyme/isoform in each plant tissue. The sequence is that of Peroxidase 1 from Catharanthus roseus (Madagascar periwinkle).